A 245-amino-acid chain; its full sequence is Orotidine 5'-phosphate decarboxylase (245 aa).

Residues aspartate 22, lysine 44, 71–80 (DLKFHDIPNT), threonine 131, arginine 192, glutamine 201, glycine 221, and arginine 222 each bind substrate. Catalysis depends on lysine 73, which acts as the Proton donor.

It belongs to the OMP decarboxylase family. Type 1 subfamily. Homodimer.

It catalyses the reaction orotidine 5'-phosphate + H(+) = UMP + CO2. Its pathway is pyrimidine metabolism; UMP biosynthesis via de novo pathway; UMP from orotate: step 2/2. Catalyzes the decarboxylation of orotidine 5'-monophosphate (OMP) to uridine 5'-monophosphate (UMP). The polypeptide is Orotidine 5'-phosphate decarboxylase (Yersinia pseudotuberculosis serotype O:3 (strain YPIII)).